The sequence spans 351 residues: Methylthioribose-1-phosphate isomerase (351 aa).

Substrate-binding positions include 51–53 (RGA), arginine 94, and glutamine 199. Aspartate 240 serves as the catalytic Proton donor. 250–251 (NK) contacts substrate.

Belongs to the EIF-2B alpha/beta/delta subunits family. MtnA subfamily. In terms of assembly, homodimer.

It catalyses the reaction 5-(methylsulfanyl)-alpha-D-ribose 1-phosphate = 5-(methylsulfanyl)-D-ribulose 1-phosphate. It functions in the pathway amino-acid biosynthesis; L-methionine biosynthesis via salvage pathway; L-methionine from S-methyl-5-thio-alpha-D-ribose 1-phosphate: step 1/6. Functionally, catalyzes the interconversion of methylthioribose-1-phosphate (MTR-1-P) into methylthioribulose-1-phosphate (MTRu-1-P). The protein is Methylthioribose-1-phosphate isomerase of Bacillus anthracis.